A 137-amino-acid chain; its full sequence is Basic phospholipase A2 homolog Bsc-K49 (137 aa).

The signal sequence occupies residues 1–16 (MRTLWIVAVLLVGVEG). 7 disulfide bridges follow: Cys42/Cys131, Cys44/Cys60, Cys59/Cys111, Cys65/Cys137, Cys66/Cys104, Cys73/Cys97, and Cys91/Cys102. Residues 121-133 (KNYKITMKMFCKK) form an important for membrane-damaging activities in eukaryotes and bacteria; heparin-binding region.

The protein belongs to the phospholipase A2 family. Group II subfamily. K49 sub-subfamily. As to quaternary structure, homodimer; non-covalently linked. As to expression, expressed by the venom gland.

It localises to the secreted. Its function is as follows. Snake venom phospholipase A2 that lacks enzymatic activity. Is myotoxic, and displays edema-inducing activities. A model of myotoxic mechanism has been proposed: an apo Lys49-PLA2 is activated by the entrance of a hydrophobic molecule (e.g. fatty acid) at the hydrophobic channel of the protein leading to a reorientation of a monomer. This reorientation causes a transition between 'inactive' to 'active' states, causing alignment of C-terminal and membrane-docking sites (MDoS) side-by-side and putting the membrane-disruption sites (MDiS) in the same plane, exposed to solvent and in a symmetric position for both monomers. The MDoS region stabilizes the toxin on membrane by the interaction of charged residues with phospholipid head groups. Subsequently, the MDiS region destabilizes the membrane with penetration of hydrophobic residues. This insertion causes a disorganization of the membrane, allowing an uncontrolled influx of ions (i.e. calcium and sodium), and eventually triggering irreversible intracellular alterations and cell death. In Bothriechis schlegelii (Eyelash palm pitviper), this protein is Basic phospholipase A2 homolog Bsc-K49.